The following is a 117-amino-acid chain: Putative phosphotransferase enzyme IIB component MPN_268 (117 aa).

The helical transmembrane segment at 1 to 21 (MKVLLWIGYVLSFGLLYLYLV) threads the bilayer. The region spanning 42 to 117 (PFAVRDFIAA…QLKQQIENER (76 aa)) is the PTS EIIB type-1 domain.

Its subcellular location is the membrane. Functionally, the phosphoenolpyruvate-dependent sugar phosphotransferase system (PTS), a major carbohydrate active -transport system, catalyzes the phosphorylation of incoming sugar substrates concomitant with their translocation across the cell membrane. The sequence is that of Putative phosphotransferase enzyme IIB component MPN_268 from Mycoplasma pneumoniae (strain ATCC 29342 / M129 / Subtype 1) (Mycoplasmoides pneumoniae).